The following is a 1191-amino-acid chain: Rho GTPase-activating protein 20 (1191 aa).

The span at 1–23 (MEAMSPQQETLGGQPGRSSSLTG) shows a compositional bias: polar residues. The interval 1 to 45 (MEAMSPQQETLGGQPGRSSSLTGVSRLAGGSCTKKKMKTLAERRR) is disordered. S46 carries the phosphoserine modification. The 103-residue stretch at 78-180 (SLVCSNRTLL…EQKDKWLSLL (103 aa)) folds into the PH domain. Residues 194 to 295 (KSIPLKIFAK…TPFNLQEPFL (102 aa)) enclose the Ras-associating domain. In terms of domain architecture, Rho-GAP spans 365-551 (ISLPNICEND…FLIENCLRIF (187 aa)). Phosphoserine is present on residues S704 and S730. Disordered stretches follow at residues 768-791 (SKKN…NHVK), 926-1014 (RLNL…SRPA), 1052-1123 (KKAK…RHCS), and 1140-1191 (HEEI…TKDI). Over residues 934–961 (SYSSLSSPGTSPSGSSVSSQDSAFSQIS) the composition is skewed to low complexity. Polar residues-rich tracts occupy residues 962–981 (EHSV…TFQA) and 1103–1116 (PVQS…SPFQ). A compositionally biased stretch (basic and acidic residues) spans 1182–1191 (IEDRYLTKDI).

In terms of tissue distribution, expressed predominantly in the brain. Lower expression is found in lymph nodes.

GTPase activator for the Rho-type GTPases by converting them to an inactive GDP-bound state. The polypeptide is Rho GTPase-activating protein 20 (ARHGAP20) (Homo sapiens (Human)).